Reading from the N-terminus, the 74-residue chain is ERTHTGEKPFECPECHKRFTRDHHLKTHMRLHTGEKPYHCSHCDRQFVQVANLRRHLRVHTGEKPYTCEICDGK.

4 C2H2-type zinc fingers span residues 1 to 4 (ERTH), 10 to 32 (FECP…MRLH), 38 to 60 (YHCS…LRVH), and 66 to 74 (YTCEICDGK).

Belongs to the krueppel C2H2-type zinc-finger protein family.

The protein resides in the nucleus. Krueppel is a gap class segmentation protein. This is Protein krueppel (Kr) from Musca domestica (House fly).